The following is a 579-amino-acid chain: 2-isopropylmalate synthase (579 aa).

One can recognise a Pyruvate carboxyltransferase domain in the interval 40–314 (PRWCAVDLRD…DPMIDFSDID (275 aa)). Mg(2+)-binding residues include D49, H253, H255, and N289. Residues 456–579 (SGKADGQWGR…VNRAIRDAQS (124 aa)) are regulatory domain.

It belongs to the alpha-IPM synthase/homocitrate synthase family. LeuA type 2 subfamily. In terms of assembly, homodimer. Mg(2+) serves as cofactor.

Its subcellular location is the cytoplasm. It carries out the reaction 3-methyl-2-oxobutanoate + acetyl-CoA + H2O = (2S)-2-isopropylmalate + CoA + H(+). It participates in amino-acid biosynthesis; L-leucine biosynthesis; L-leucine from 3-methyl-2-oxobutanoate: step 1/4. Catalyzes the condensation of the acetyl group of acetyl-CoA with 3-methyl-2-oxobutanoate (2-ketoisovalerate) to form 3-carboxy-3-hydroxy-4-methylpentanoate (2-isopropylmalate). In Pseudarthrobacter chlorophenolicus (strain ATCC 700700 / DSM 12829 / CIP 107037 / JCM 12360 / KCTC 9906 / NCIMB 13794 / A6) (Arthrobacter chlorophenolicus), this protein is 2-isopropylmalate synthase.